The chain runs to 345 residues: S-adenosylmethionine:tRNA ribosyltransferase-isomerase (345 aa).

This sequence belongs to the QueA family. In terms of assembly, monomer.

The protein localises to the cytoplasm. The catalysed reaction is 7-aminomethyl-7-carbaguanosine(34) in tRNA + S-adenosyl-L-methionine = epoxyqueuosine(34) in tRNA + adenine + L-methionine + 2 H(+). Its pathway is tRNA modification; tRNA-queuosine biosynthesis. Transfers and isomerizes the ribose moiety from AdoMet to the 7-aminomethyl group of 7-deazaguanine (preQ1-tRNA) to give epoxyqueuosine (oQ-tRNA). In Shewanella loihica (strain ATCC BAA-1088 / PV-4), this protein is S-adenosylmethionine:tRNA ribosyltransferase-isomerase.